A 188-amino-acid polypeptide reads, in one-letter code: dCTP deaminase (188 aa).

109 to 114 (KSTYAR) is a binding site for dCTP. Catalysis depends on E135, which acts as the Proton donor/acceptor. Q154, Y168, and Q178 together coordinate dCTP.

It belongs to the dCTP deaminase family. Homotrimer.

The enzyme catalyses dCTP + H2O + H(+) = dUTP + NH4(+). It participates in pyrimidine metabolism; dUMP biosynthesis; dUMP from dCTP (dUTP route): step 1/2. Its function is as follows. Catalyzes the deamination of dCTP to dUTP. The polypeptide is dCTP deaminase (Helicobacter acinonychis (strain Sheeba)).